The following is a 306-amino-acid chain: Small ribosomal subunit protein uS2 (306 aa).

The tract at residues 257 to 306 is disordered; sequence EGDKKDETAAAAEVQTSAETEKVADAEKPAEAVAEAEAEAPAADADAEQA. Positions 275–286 are enriched in basic and acidic residues; the sequence is ETEKVADAEKPA. A compositionally biased stretch (low complexity) spans 287–300; sequence EAVAEAEAEAPAAD.

It belongs to the universal ribosomal protein uS2 family.

In Streptomyces griseus subsp. griseus (strain JCM 4626 / CBS 651.72 / NBRC 13350 / KCC S-0626 / ISP 5235), this protein is Small ribosomal subunit protein uS2.